A 138-amino-acid chain; its full sequence is Nucleoside diphosphate kinase (138 aa).

Lysine 9, phenylalanine 57, arginine 85, threonine 91, arginine 102, and asparagine 112 together coordinate ATP. The Pros-phosphohistidine intermediate role is filled by histidine 115.

The protein belongs to the NDK family. As to quaternary structure, homotetramer. The cofactor is Mg(2+).

It localises to the cytoplasm. The catalysed reaction is a 2'-deoxyribonucleoside 5'-diphosphate + ATP = a 2'-deoxyribonucleoside 5'-triphosphate + ADP. It catalyses the reaction a ribonucleoside 5'-diphosphate + ATP = a ribonucleoside 5'-triphosphate + ADP. Its function is as follows. Major role in the synthesis of nucleoside triphosphates other than ATP. The ATP gamma phosphate is transferred to the NDP beta phosphate via a ping-pong mechanism, using a phosphorylated active-site intermediate. This is Nucleoside diphosphate kinase from Exiguobacterium sibiricum (strain DSM 17290 / CCUG 55495 / CIP 109462 / JCM 13490 / 255-15).